The following is a 403-amino-acid chain: Serine/threonine transporter SstT (403 aa).

The next 9 helical transmembrane spans lie at 14 to 34 (VTQIVIGLLAGIALALLAPAI), 44 to 64 (VFVSALKAVAPVLVFILVMAS), 79 to 99 (ILWLYLLGTFAAAVVAVFASM), 138 to 158 (ALLNANFIGVLTWAIGLGVAL), 175 to 195 (GVTLIVRVVIRFAPLGIFGLV), 214 to 234 (LAVLIGCMLFVALVMNPLIVF), 295 to 315 (MAGAAITITVLTLAAVHTLGI), 327 to 347 (VVAAVCACGASGVAGGSLLLI), and 353 to 373 (LFGIPSEIAMQVVAVGFIIGV).

The protein belongs to the dicarboxylate/amino acid:cation symporter (DAACS) (TC 2.A.23) family.

It localises to the cell inner membrane. It catalyses the reaction L-serine(in) + Na(+)(in) = L-serine(out) + Na(+)(out). It carries out the reaction L-threonine(in) + Na(+)(in) = L-threonine(out) + Na(+)(out). In terms of biological role, involved in the import of serine and threonine into the cell, with the concomitant import of sodium (symport system). The polypeptide is Serine/threonine transporter SstT (Pseudomonas putida (strain ATCC 47054 / DSM 6125 / CFBP 8728 / NCIMB 11950 / KT2440)).